Here is a 235-residue protein sequence, read N- to C-terminus: Phosphatidylserine decarboxylase proenzyme (235 aa).

Catalysis depends on Ser204, which acts as the Schiff-base intermediate with substrate; via pyruvic acid. Ser204 is subject to Pyruvic acid (Ser); by autocatalysis.

The protein belongs to the phosphatidylserine decarboxylase family. PSD-A subfamily. As to quaternary structure, heterodimer of a large membrane-associated beta subunit and a small pyruvoyl-containing alpha subunit. It depends on pyruvate as a cofactor. In terms of processing, is synthesized initially as an inactive proenzyme. Formation of the active enzyme involves a self-maturation process in which the active site pyruvoyl group is generated from an internal serine residue via an autocatalytic post-translational modification. Two non-identical subunits are generated from the proenzyme in this reaction, and the pyruvate is formed at the N-terminus of the alpha chain, which is derived from the carboxyl end of the proenzyme. The post-translation cleavage follows an unusual pathway, termed non-hydrolytic serinolysis, in which the side chain hydroxyl group of the serine supplies its oxygen atom to form the C-terminus of the beta chain, while the remainder of the serine residue undergoes an oxidative deamination to produce ammonia and the pyruvoyl prosthetic group on the alpha chain.

Its subcellular location is the cell membrane. The catalysed reaction is a 1,2-diacyl-sn-glycero-3-phospho-L-serine + H(+) = a 1,2-diacyl-sn-glycero-3-phosphoethanolamine + CO2. It functions in the pathway phospholipid metabolism; phosphatidylethanolamine biosynthesis; phosphatidylethanolamine from CDP-diacylglycerol: step 2/2. In terms of biological role, catalyzes the formation of phosphatidylethanolamine (PtdEtn) from phosphatidylserine (PtdSer). The polypeptide is Phosphatidylserine decarboxylase proenzyme (Mycobacterium sp. (strain JLS)).